Here is a 380-residue protein sequence, read N- to C-terminus: Chorismate synthase (380 aa).

NADP(+)-binding residues include R40 and R46. Residues 128-130, 247-248, G292, 307-311, and R333 contribute to the FMN site; these read RSS, QA, and KPIPT.

The protein belongs to the chorismate synthase family. In terms of assembly, homotetramer. It depends on FMNH2 as a cofactor.

It catalyses the reaction 5-O-(1-carboxyvinyl)-3-phosphoshikimate = chorismate + phosphate. The protein operates within metabolic intermediate biosynthesis; chorismate biosynthesis; chorismate from D-erythrose 4-phosphate and phosphoenolpyruvate: step 7/7. Catalyzes the anti-1,4-elimination of the C-3 phosphate and the C-6 proR hydrogen from 5-enolpyruvylshikimate-3-phosphate (EPSP) to yield chorismate, which is the branch point compound that serves as the starting substrate for the three terminal pathways of aromatic amino acid biosynthesis. This reaction introduces a second double bond into the aromatic ring system. In Alkaliphilus metalliredigens (strain QYMF), this protein is Chorismate synthase.